The primary structure comprises 382 residues: Proton extrusion protein PxcA (382 aa).

The next 4 helical transmembrane spans lie at 162–182, 257–277, 305–325, and 340–360; these read ILLL…TYIV, AIKN…VCLV, IILF…TVLL, and FILL…KYWI.

The protein belongs to the CemA family.

It is found in the cell inner membrane. Its function is as follows. Required for H(+) efflux immediately after light irradiation to form a rapid H(+) concentration gradient across the thylakoid membranes. Together with PxcL, contributes to transient H(+) uptake following dark to light transition. In Parasynechococcus marenigrum (strain WH8102), this protein is Proton extrusion protein PxcA.